A 678-amino-acid polypeptide reads, in one-letter code: Penicillin-binding protein activator LpoA (678 aa).

The N-terminal stretch at 1-26 (MVPSTFSRLKAARCLPVVLAALIFAG) is a signal peptide. Cysteine 27 carries N-palmitoyl cysteine lipidation. A lipid anchor (S-diacylglycerol cysteine) is attached at cysteine 27. A compositionally biased stretch (low complexity) spans 300–310 (AADVAEQPQPQ). Disordered regions lie at residues 300 to 340 (AADV…PVSA) and 496 to 528 (ALTGSPITPRATTDSGMTTNNPTLQTTPTDDQF). Residues 311-327 (TADSVASPAQASVSDLT) are compositionally biased toward polar residues. Composition is skewed to low complexity over residues 330 to 340 (QPAAQPVPVSA) and 513 to 528 (TTNNPTLQTTPTDDQF).

The protein belongs to the LpoA family. In terms of assembly, interacts with PBP1a.

The protein localises to the cell outer membrane. In terms of biological role, regulator of peptidoglycan synthesis that is essential for the function of penicillin-binding protein 1A (PBP1a). The polypeptide is Penicillin-binding protein activator LpoA (Shigella flexneri serotype X (strain 2002017)).